Reading from the N-terminus, the 206-residue chain is Uridine kinase (206 aa).

ATP is bound at residue 11 to 18; it reads GGTGSGKS.

It belongs to the uridine kinase family.

It localises to the cytoplasm. It catalyses the reaction uridine + ATP = UMP + ADP + H(+). It carries out the reaction cytidine + ATP = CMP + ADP + H(+). Its pathway is pyrimidine metabolism; CTP biosynthesis via salvage pathway; CTP from cytidine: step 1/3. It participates in pyrimidine metabolism; UMP biosynthesis via salvage pathway; UMP from uridine: step 1/1. The polypeptide is Uridine kinase (Clostridium botulinum (strain Langeland / NCTC 10281 / Type F)).